Here is a 554-residue protein sequence, read N- to C-terminus: Dihydroxy-acid dehydratase (554 aa).

Cys-51 is a [2Fe-2S] cluster binding site. A Mg(2+)-binding site is contributed by Asp-83. Cys-124 contacts [2Fe-2S] cluster. Mg(2+) contacts are provided by Asp-125 and Lys-126. Lys-126 is modified (N6-carboxylysine). Residue Cys-193 coordinates [2Fe-2S] cluster. Glu-444 is a Mg(2+) binding site. Ser-470 serves as the catalytic Proton acceptor.

The protein belongs to the IlvD/Edd family. As to quaternary structure, homodimer. [2Fe-2S] cluster is required as a cofactor. The cofactor is Mg(2+).

The catalysed reaction is (2R)-2,3-dihydroxy-3-methylbutanoate = 3-methyl-2-oxobutanoate + H2O. The enzyme catalyses (2R,3R)-2,3-dihydroxy-3-methylpentanoate = (S)-3-methyl-2-oxopentanoate + H2O. Its pathway is amino-acid biosynthesis; L-isoleucine biosynthesis; L-isoleucine from 2-oxobutanoate: step 3/4. It functions in the pathway amino-acid biosynthesis; L-valine biosynthesis; L-valine from pyruvate: step 3/4. In terms of biological role, functions in the biosynthesis of branched-chain amino acids. Catalyzes the dehydration of (2R,3R)-2,3-dihydroxy-3-methylpentanoate (2,3-dihydroxy-3-methylvalerate) into 2-oxo-3-methylpentanoate (2-oxo-3-methylvalerate) and of (2R)-2,3-dihydroxy-3-methylbutanoate (2,3-dihydroxyisovalerate) into 2-oxo-3-methylbutanoate (2-oxoisovalerate), the penultimate precursor to L-isoleucine and L-valine, respectively. The polypeptide is Dihydroxy-acid dehydratase (Vesicomyosocius okutanii subsp. Calyptogena okutanii (strain HA)).